A 203-amino-acid polypeptide reads, in one-letter code: Ras-related protein Rab-7L1 (203 aa).

6 residues coordinate GTP: Ser33, Lys34, His35, Tyr36, Lys37, and Thr39. Positions Tyr36–Phe44 match the Effector region motif. Position 71 is a phosphothreonine; by LRRK2 (Thr71). Ser72 is modified (phosphoserine; by LRRK2). GTP is bound by residues Lys126, Val156, and Lys157. S-geranylgeranyl cysteine attachment occurs at residues Cys202 and Cys203.

Belongs to the small GTPase superfamily. Rab family. Interacts with LRRK2 (via the N-terminus); this interaction is direct and stimulates kinase activity. In terms of processing, in case of Salmonella enterica serovar Typhimurium (S.typhimurium) infection, is proteolytically cleaved between Gly-41 and Val-42 by the GtgE viral protease encoded on the Gifsy-2 lysogen bacteriophage, which therefore prevents the recruitment of RAB29 to S.typhimurium-containing vacuoles. In contrast, no proteolytically cleavage is detected in S.typhi-infected cells. Ubiquitous.

The protein localises to the cell membrane. It is found in the cytoplasm. It localises to the perinuclear region. Its subcellular location is the golgi apparatus. The protein resides in the golgi apparatus membrane. The protein localises to the trans-Golgi network. It is found in the vacuole. It localises to the cytoskeleton. Functionally, the small GTPases Rab are key regulators in vesicle trafficking. Essential for maintaining the integrity of the endosome-trans-Golgi network structure. Together with LRRK2, plays a role in the retrograde trafficking pathway for recycling proteins, such as mannose 6 phosphate receptor (M6PR), between lysosomes and the Golgi apparatus in a retromer-dependent manner. Recruits LRRK2 to the Golgi complex and stimulates LRRK2 kinase activity. Stimulates phosphorylation of RAB10 'Thr-73' by LRRK2. Regulates neuronal process morphology in the intact central nervous system (CNS). May play a role in the formation of typhoid toxin transport intermediates during Salmonella enterica serovar Typhi (S.typhi) epithelial cell infection. The polypeptide is Ras-related protein Rab-7L1 (RAB29) (Homo sapiens (Human)).